Here is an 876-residue protein sequence, read N- to C-terminus: MATERYNPRDTEPRWQQEWDARKVFETENDDPREKYYVLEMFPYPSGRIHMGHVRNYTMGDVVARYKRARGFNVLHPMGWDAFGMPAENAAMERGVHPAGWTYQNIAAMKAQLKVMGLSLDWSREFATCDPAYYQRQQYLFLDFLEKGLVYRRQSKVNWDPVDNTVLANEQVIDGRGWRSGALVEQRELTQWFFRITDFSQDLLDALDGLEQWPEKVRLMQKNWIGRSEGLALRWALDPATVPGETKELTVYTTRPDTLFGASFLAISADHPLAREAAAKDAAIDAFCEECRRAGTSLAALETAEKKGIDTGIRARHPFDPEWELPVYVANFVLMDYGTGAIFGCPSGDQRDLDFARKYGLSVVPVVMPKDADAATFTIEDEAYGGDGVMINSRFLDGLSTEEAFEAVASKLEQETLDGAPRAERKVNFRLRDWGISRQRYWGCPIPVIHCEDCGVVPVPKADLPVTLPPDVTFDKPGNPLDRHPTWRHVACPQCGKDARRETDTMDTFVDSSWYYARFTAPWEDKPTDPKAANHWLPVDQYIGGIEHAILHLLYSRFFTRAMKATGHVAMDEPFKGLFTQGMVVHETYSRGEGAQREWVTPAEIRIDEIDGRRRAVLIETGEEVAIGSIEKMSKSKKNVVDPDDIIGSYGADTARFFVLSDSPPDRDVIWSEAGVEGAHRFVQRVWRLVGEAAESLRGAKASPAKEGEGLAISQAAHRTLRAVEADYDKLAFNKAVARIYELVNVLAAPLTQVAAGKADQAVTAAVKDATTILIDLIAPMMPHLAEECWREIGGEGLIAERPWPTFDPALVVENEITLPVQINGKKRADLTIARDADQSAIESAVLALDAVKAALNGASPRKIIVVPQRIVNVVV.

The 'HIGH' region motif lies at 43 to 53; that stretch reads PYPSGRIHMGH. The short motif at 632–636 is the 'KMSKS' region element; that stretch reads KMSKS. Lysine 635 provides a ligand contact to ATP.

The protein belongs to the class-I aminoacyl-tRNA synthetase family.

It is found in the cytoplasm. The catalysed reaction is tRNA(Leu) + L-leucine + ATP = L-leucyl-tRNA(Leu) + AMP + diphosphate. The protein is Leucine--tRNA ligase of Sinorhizobium fredii (strain NBRC 101917 / NGR234).